The chain runs to 373 residues: Histone-lysine N-methyltransferase SETD7 (373 aa).

The segment at 1–20 (MDSDDDNMEEVVEGPLDEDD) is disordered. 3 MORN repeats span residues 36–58 (FEGHFVHGEKNGKGKFFFFDGST), 59–81 (LEGFYVDDALQGQGVYTYEDGGA), and 106–128 (FRGRYKDNIRYGMCWVYYPDGAC). The SET domain maps to 214 to 336 (QRVYVGQSLI…KDEELTVAYG (123 aa)). Residues 226–228 (AGE), asparagine 296, and histidine 297 each bind S-adenosyl-L-methionine.

Belongs to the class V-like SAM-binding methyltransferase superfamily. Histone-lysine methyltransferase family. SET7 subfamily.

Its subcellular location is the nucleus. It localises to the chromosome. The enzyme catalyses L-lysyl(4)-[histone H3] + S-adenosyl-L-methionine = N(6)-methyl-L-lysyl(4)-[histone H3] + S-adenosyl-L-homocysteine + H(+). The catalysed reaction is L-lysyl-[protein] + S-adenosyl-L-methionine = N(6)-methyl-L-lysyl-[protein] + S-adenosyl-L-homocysteine + H(+). Histone methyltransferase that specifically monomethylates 'Lys-4' of histone H3. H3 'Lys-4' methylation represents a specific tag for epigenetic transcriptional activation. Plays a central role in the transcriptional activation of genes. Also has methyltransferase activity toward non-histone proteins. This Danio rerio (Zebrafish) protein is Histone-lysine N-methyltransferase SETD7 (setd7).